We begin with the raw amino-acid sequence, 190 residues long: NAD(P)H-quinone oxidoreductase subunit I (190 aa).

2 consecutive 4Fe-4S ferredoxin-type domains span residues 55–84 and 95–124; these read GRIH…VDWT and KHYS…MTEE. C64, C67, C70, C74, C104, C107, C110, and C114 together coordinate [4Fe-4S] cluster. Positions 169-190 are disordered; that stretch reads IEPHDLPAGSQRAGKRPEEITD.

Belongs to the complex I 23 kDa subunit family. In terms of assembly, NDH-1 is composed of at least 11 different subunits. [4Fe-4S] cluster is required as a cofactor.

The protein resides in the cellular thylakoid membrane. The catalysed reaction is a plastoquinone + NADH + (n+1) H(+)(in) = a plastoquinol + NAD(+) + n H(+)(out). It carries out the reaction a plastoquinone + NADPH + (n+1) H(+)(in) = a plastoquinol + NADP(+) + n H(+)(out). Its function is as follows. NDH-1 shuttles electrons from an unknown electron donor, via FMN and iron-sulfur (Fe-S) centers, to quinones in the respiratory and/or the photosynthetic chain. The immediate electron acceptor for the enzyme in this species is believed to be plastoquinone. Couples the redox reaction to proton translocation, and thus conserves the redox energy in a proton gradient. This chain is NAD(P)H-quinone oxidoreductase subunit I, found in Microcystis aeruginosa (strain NIES-843 / IAM M-2473).